A 123-amino-acid chain; its full sequence is Large ribosomal subunit protein eL8 (123 aa).

This sequence belongs to the eukaryotic ribosomal protein eL8 family. In terms of assembly, part of the 50S ribosomal subunit. Probably part of the RNase P complex.

It is found in the cytoplasm. In terms of biological role, multifunctional RNA-binding protein that recognizes the K-turn motif in ribosomal RNA, the RNA component of RNase P, box H/ACA, box C/D and box C'/D' sRNAs. The protein is Large ribosomal subunit protein eL8 of Methanopyrus kandleri (strain AV19 / DSM 6324 / JCM 9639 / NBRC 100938).